Here is a 145-residue protein sequence, read N- to C-terminus: Histone H2B.1, sperm (145 aa).

A disordered region spans residues 1–52 (MPSQKSPTKRSPTKRSPTKRSPQKGGKGGKGAKRGGKAGKRRRGVQVKRRRR). 4 short sequence motifs (SPKK motif) span residues 6–9 (SPTK), 11–14 (SPTK), 16–19 (SPTK), and 21–24 (SPQK). 2 stretches are compositionally biased toward basic residues: residues 7–22 (PTKR…KRSP) and 30–52 (KGAK…RRRR). Phosphoserine is present on residues Ser16 and Ser21. Ser132 carries O-linked (GlcNAc) serine glycosylation. Lys140 participates in a covalent cross-link: Glycyl lysine isopeptide (Lys-Gly) (interchain with G-Cter in ubiquitin).

The protein belongs to the histone H2B family. The nucleosome is a histone octamer containing two molecules each of H2A, H2B, H3 and H4 assembled in one H3-H4 heterotetramer and two H2A-H2B heterodimers. The octamer wraps approximately 147 bp of DNA. Monoubiquitination of Lys-140 gives a specific tag for epigenetic transcriptional activation and is also prerequisite for histone H3 'Lys-4' and 'Lys-79' methylation. Post-translationally, phosphorylated on SPKK motifs 3 and 4; which may regulate DNA binding. Dephosphorylated during maturation of spermatids to mature sperm and rephosphorylated at fertilization. In terms of processing, glcNAcylation at Ser-132 promotes monoubiquitination of Lys-140. It fluctuates in response to extracellular glucose, and associates with transcribed genes.

Its subcellular location is the nucleus. It is found in the chromosome. Its function is as follows. Core component of nucleosome. Nucleosomes wrap and compact DNA into chromatin, limiting DNA accessibility to the cellular machineries which require DNA as a template. Histones thereby play a central role in transcription regulation, DNA repair, DNA replication and chromosomal stability. DNA accessibility is regulated via a complex set of post-translational modifications of histones, also called histone code, and nucleosome remodeling. This is Histone H2B.1, sperm from Parechinus angulosus (Angulate sea urchin).